Here is a 329-residue protein sequence, read N- to C-terminus: MYG1 protein (329 aa).

Belongs to the MYG1 family.

The protein is MYG1 protein of Dictyostelium discoideum (Social amoeba).